Here is a 728-residue protein sequence, read N- to C-terminus: Cellulose synthase-like protein E6 (728 aa).

The next 2 membrane-spanning stretches (helical) occupy residues 21 to 43 (AVYRLQAATVAAGILLVLYYRAT) and 53 to 73 (AAWLGMAAAELWFAVYWVITQ). Active-site residues include D141 and D446. Helical transmembrane passes span 523-543 (LWAANSLPTIYYVMIPALGLV), 546-566 (TPLFPEIMSPWATPFIYVFCV), 646-666 (PEFVIIATVALLNFVCLVAGL), 669-689 (IMAGVWNVFLPQVILCGLIVI), and 707-727 (IPLPVTLASIGFVMLAFLLPI).

Belongs to the glycosyltransferase 2 family. Plant cellulose synthase-like E subfamily.

It localises to the golgi apparatus membrane. In terms of biological role, thought to be a Golgi-localized beta-glycan synthase that polymerize the backbones of noncellulosic polysaccharides (hemicelluloses) of plant cell wall. The protein is Cellulose synthase-like protein E6 (CSLE6) of Oryza sativa subsp. japonica (Rice).